Reading from the N-terminus, the 472-residue chain is WASH complex subunit 1 (472 aa).

The tract at residues 1 to 51 (MPQNRSVESQAYSLPLILPDLRREEAIHQITDTLQHLQTVSNDIFSRILQR) is required for WASH complex assembly. 2 disordered regions span residues 294–411 (DRQD…GGDL) and 429–472 (KVPA…DWES). Over residues 301–334 (LPPPPPPPPPPPPPPPPEPSALSPPAPPPPPLSI) the composition is skewed to pro residues. Positions 352–472 (QGAPKEVVNP…GDGDEDDWES (121 aa)) are VCA. One can recognise a WH2 domain in the interval 364–386 (GRASLLESIRQAGGIGKANLRNV). The segment covering 385 to 400 (NVKEKKLEKKKMKEQE) has biased composition (basic and acidic residues).

Belongs to the WASH1 family. As to quaternary structure, component of the WASH complex.

It is found in the early endosome membrane. It localises to the recycling endosome membrane. Acts as a nucleation-promoting factor at the surface of endosomes, where it recruits and activates the Arp2/3 complex to induce actin polymerization, playing a key role in the fission of tubules that serve as transport intermediates during endosome sorting. The protein is WASH complex subunit 1 of Xenopus laevis (African clawed frog).